Reading from the N-terminus, the 60-residue chain is Cytochrome c oxidase subunit 9, mitochondrial (60 aa).

The Mitochondrial matrix segment spans residues 1-18 (MSAIAPITGSLKKRIMKD). Residues 19 to 37 (IAVGMGLGTVLGSYWWWGF) form a helical membrane-spanning segment. Over 38–57 (HKPKIAARENYYTQLAEQKA) the chain is Mitochondrial intermembrane. The propeptide at 58–60 (AEE) is removed in mature form.

Belongs to the fungal cytochrome c oxidase subunit 7a family. In terms of assembly, component of the cytochrome c oxidase (complex IV, CIV), a multisubunit enzyme composed of a catalytic core of 3 subunits and several supernumerary subunits. The complex exists as a monomer or a dimer and forms supercomplexes (SCs) in the inner mitochondrial membrane with ubiquinol-cytochrome c oxidoreductase (cytochrome b-c1 complex, complex III, CIII).

It is found in the mitochondrion inner membrane. It functions in the pathway energy metabolism; oxidative phosphorylation. Functionally, component of the cytochrome c oxidase, the last enzyme in the mitochondrial electron transport chain which drives oxidative phosphorylation. The respiratory chain contains 3 multisubunit complexes succinate dehydrogenase (complex II, CII), ubiquinol-cytochrome c oxidoreductase (cytochrome b-c1 complex, complex III, CIII) and cytochrome c oxidase (complex IV, CIV), that cooperate to transfer electrons derived from NADH and succinate to molecular oxygen, creating an electrochemical gradient over the inner membrane that drives transmembrane transport and the ATP synthase. Cytochrome c oxidase is the component of the respiratory chain that catalyzes the reduction of oxygen to water. Electrons originating from reduced cytochrome c in the intermembrane space (IMS) are transferred via the dinuclear copper A center (CU(A)) of subunit 2 and heme A of subunit 1 to the active site in subunit 1, a binuclear center (BNC) formed by heme A3 and copper B (CU(B)). The BNC reduces molecular oxygen to 2 water molecules using 4 electrons from cytochrome c in the IMS and 4 protons from the mitochondrial matrix. This Eremothecium gossypii (strain ATCC 10895 / CBS 109.51 / FGSC 9923 / NRRL Y-1056) (Yeast) protein is Cytochrome c oxidase subunit 9, mitochondrial (COX9).